We begin with the raw amino-acid sequence, 347 residues long: Involucrin (347 aa).

2 disordered regions span residues 1-43 and 56-347; these read MSQQ…LPAP and PLED…RRSL. Residues 27–36 are compositionally biased toward polar residues; the sequence is ADTQQEQVKQ. Composition is skewed to low complexity over residues 70-114 and 138-161; these read VPEQ…QQES and DQQQ…QQES. Basic and acidic residues-rich tracts occupy residues 164 to 173 and 212 to 221; these read QELHVDHHQQ. 2 stretches are compositionally biased toward low complexity: residues 222 to 241 and 265 to 285; these read QQES…QQES and DQQQ…QQQE. Basic and acidic residues predominate over residues 287-341; it reads QEDHQKAEHLEQEEAQREQQLKGQLEQEKKGVYQHLDQELTKRDEHLEKKGEHCW.

Belongs to the involucrin family. In terms of assembly, directly or indirectly cross-linked to cornifelin (CNFN). In terms of processing, substrate of transglutaminase. Specific glutamines or lysines are cross-linked to keratins, desmoplakin and to inter involucrin molecules. Keratinocytes of epidermis and other stratified squamous epithelia.

Its subcellular location is the cytoplasm. In terms of biological role, part of the insoluble cornified cell envelope (CE) of stratified squamous epithelia. This chain is Involucrin (IVL), found in Sus scrofa (Pig).